Consider the following 398-residue polypeptide: Putative transposase y4qJ (398 aa).

The protein belongs to the transposase 32 family.

This is Putative transposase y4qJ from Sinorhizobium fredii (strain NBRC 101917 / NGR234).